We begin with the raw amino-acid sequence, 234 residues long: Zinc finger FYVE domain-containing protein 21 (234 aa).

The segment at 44–104 (DKECPRCMQC…QCADCALVSH (61 aa)) adopts an FYVE-type zinc-finger fold. Positions 50, 53, 66, 69, 74, 77, 96, and 99 each coordinate Zn(2+). A PH-like region spans residues 107 to 234 (AEFYDKQLKV…TKLLYESRDQ (128 aa)).

Interacts with PTK2/FAK1.

Its subcellular location is the cell junction. It localises to the focal adhesion. It is found in the cytoplasmic vesicle. The protein localises to the endosome. Functionally, plays a role in cell adhesion, and thereby in cell motility which requires repeated formation and disassembly of focal adhesions. Regulates microtubule-induced PTK2/FAK1 dephosphorylation, an event important for focal adhesion disassembly, as well as integrin beta-1/ITGB1 cell surface expression. This chain is Zinc finger FYVE domain-containing protein 21 (Zfyve21), found in Rattus norvegicus (Rat).